Here is a 338-residue protein sequence, read N- to C-terminus: Lipoate-protein ligase A (338 aa).

A BPL/LPL catalytic domain is found at 29-216; the sequence is PATQRVLFLW…AFFEHYSERV (188 aa). ATP-binding positions include R71, 76–79, and K134; that span reads GAVF. Residue K134 participates in (R)-lipoate binding.

This sequence belongs to the LplA family. In terms of assembly, monomer.

Its subcellular location is the cytoplasm. The catalysed reaction is L-lysyl-[lipoyl-carrier protein] + (R)-lipoate + ATP = N(6)-[(R)-lipoyl]-L-lysyl-[lipoyl-carrier protein] + AMP + diphosphate + H(+). The protein operates within protein modification; protein lipoylation via exogenous pathway; protein N(6)-(lipoyl)lysine from lipoate: step 1/2. It functions in the pathway protein modification; protein lipoylation via exogenous pathway; protein N(6)-(lipoyl)lysine from lipoate: step 2/2. In terms of biological role, catalyzes both the ATP-dependent activation of exogenously supplied lipoate to lipoyl-AMP and the transfer of the activated lipoyl onto the lipoyl domains of lipoate-dependent enzymes. This Enterobacter sp. (strain 638) protein is Lipoate-protein ligase A.